The following is a 654-amino-acid chain: Fructose-1,6-bisphosphatase class 3 (654 aa).

The protein belongs to the FBPase class 3 family. Mn(2+) is required as a cofactor.

The enzyme catalyses beta-D-fructose 1,6-bisphosphate + H2O = beta-D-fructose 6-phosphate + phosphate. It participates in carbohydrate biosynthesis; gluconeogenesis. The polypeptide is Fructose-1,6-bisphosphatase class 3 (Staphylococcus haemolyticus (strain JCSC1435)).